Here is a 140-residue protein sequence, read N- to C-terminus: Putative pre-16S rRNA nuclease (140 aa).

It belongs to the YqgF nuclease family.

The protein localises to the cytoplasm. Its function is as follows. Could be a nuclease involved in processing of the 5'-end of pre-16S rRNA. This Parabacteroides distasonis (strain ATCC 8503 / DSM 20701 / CIP 104284 / JCM 5825 / NCTC 11152) protein is Putative pre-16S rRNA nuclease.